The primary structure comprises 424 residues: Serpin A11 (424 aa).

The signal sequence occupies residues 1–21; the sequence is MGPVWLWLWLLVAEVLLPVHC. Residues Asn-108, Asn-171, Asn-352, and Asn-387 are each glycosylated (N-linked (GlcNAc...) asparagine).

The protein belongs to the serpin family.

The protein localises to the secreted. This chain is Serpin A11 (Serpina11), found in Mus musculus (Mouse).